The following is a 182-amino-acid chain: Shikimate kinase (182 aa).

14 to 19 contacts ATP; it reads GAGKTT. Residue Thr-18 participates in Mg(2+) binding. Positions 36, 60, and 84 each coordinate substrate. Residue Arg-122 coordinates ATP. Arg-141 provides a ligand contact to substrate.

It belongs to the shikimate kinase family. As to quaternary structure, monomer. Mg(2+) is required as a cofactor.

Its subcellular location is the cytoplasm. It carries out the reaction shikimate + ATP = 3-phosphoshikimate + ADP + H(+). It functions in the pathway metabolic intermediate biosynthesis; chorismate biosynthesis; chorismate from D-erythrose 4-phosphate and phosphoenolpyruvate: step 5/7. Catalyzes the specific phosphorylation of the 3-hydroxyl group of shikimic acid using ATP as a cosubstrate. This chain is Shikimate kinase, found in Marinomonas sp. (strain MWYL1).